The primary structure comprises 350 residues: Erythronate-4-phosphate dehydrogenase (350 aa).

Substrate-binding residues include serine 45 and threonine 66. NAD(+) contacts are provided by residues 124–125 (QV), aspartate 144, 203–205 (ASR), and aspartate 226. Arginine 205 is a catalytic residue. Glutamate 231 is an active-site residue. Histidine 248 (proton donor) is an active-site residue. Glycine 251 serves as a coordination point for NAD(+).

It belongs to the D-isomer specific 2-hydroxyacid dehydrogenase family. PdxB subfamily. As to quaternary structure, homodimer.

Its subcellular location is the cytoplasm. The enzyme catalyses 4-phospho-D-erythronate + NAD(+) = (R)-3-hydroxy-2-oxo-4-phosphooxybutanoate + NADH + H(+). It functions in the pathway cofactor biosynthesis; pyridoxine 5'-phosphate biosynthesis; pyridoxine 5'-phosphate from D-erythrose 4-phosphate: step 2/5. In terms of biological role, catalyzes the oxidation of erythronate-4-phosphate to 3-hydroxy-2-oxo-4-phosphonooxybutanoate. This is Erythronate-4-phosphate dehydrogenase from Legionella pneumophila (strain Lens).